Here is a 322-residue protein sequence, read N- to C-terminus: Protein-L-isoaspartate O-methyltransferase (322 aa).

A disordered region spans residues 1–101 (MSGERAKRFP…AKQGDRSAAP (101 aa)). The span at 14–29 (EDLKREPRKPEGRVAE) shows a compositional bias: basic and acidic residues. Composition is skewed to low complexity over residues 33–51 (AGDA…PAAA) and 76–91 (HAPA…PQGG). Ser-170 is an active-site residue.

It belongs to the methyltransferase superfamily. L-isoaspartyl/D-aspartyl protein methyltransferase family.

The protein resides in the cytoplasm. The enzyme catalyses [protein]-L-isoaspartate + S-adenosyl-L-methionine = [protein]-L-isoaspartate alpha-methyl ester + S-adenosyl-L-homocysteine. Functionally, catalyzes the methyl esterification of L-isoaspartyl residues in peptides and proteins that result from spontaneous decomposition of normal L-aspartyl and L-asparaginyl residues. It plays a role in the repair and/or degradation of damaged proteins. This Burkholderia pseudomallei (strain 1710b) protein is Protein-L-isoaspartate O-methyltransferase.